Reading from the N-terminus, the 30-residue chain is Cyclotide mden-G (30 aa).

The cyclopeptide (Gly-Asn) cross-link spans 1–30; that stretch reads GIPCAESCVYIPCITAALGCSCKNKVCYRN. Intrachain disulfides connect Cys-4-Cys-20, Cys-8-Cys-22, and Cys-13-Cys-27.

The protein belongs to the cyclotide family. Bracelet subfamily. Post-translationally, this is a cyclic peptide.

Functionally, probably participates in a plant defense mechanism. The chain is Cyclotide mden-G from Melicytus dentatus (Tree violet).